The following is a 238-amino-acid chain: UPF0758 protein Dtpsy_2777 (238 aa).

Residues 116–238 (VFDSPQAVQH…ALSMAEQGLV (123 aa)) form the MPN domain. Zn(2+) contacts are provided by His187, His189, and Asp200. The short motif at 187-200 (HNHPSGSVQPSRAD) is the JAMM motif element.

It belongs to the UPF0758 family.

The protein is UPF0758 protein Dtpsy_2777 of Acidovorax ebreus (strain TPSY) (Diaphorobacter sp. (strain TPSY)).